We begin with the raw amino-acid sequence, 1853 residues long: DNA-directed RNA polymerase II subunit RPB1 (1853 aa).

Zn(2+)-binding residues include Cys66, Cys69, Cys76, His79, Cys106, Cys109, Cys149, and Cys177. The segment at Pro256 to Asp268 is lid loop. Residues Asn314–Lys331 form a rudder loop region. Mg(2+) contacts are provided by Asp489, Asp491, and Asp493. Residues Pro827–Glu839 form a bridging helix region. A Glycyl lysine isopeptide (Lys-Gly) (interchain with G-Cter in ubiquitin) cross-link involves residue Lys1260. Disordered regions lie at residues Pro1520–Pro1568 and Ser1589–Asn1853. Low complexity-rich tracts occupy residues Ser1589–Pro1811 and Tyr1821–Asn1853. 26 repeat units span residues Tyr1592 to Ser1598, Tyr1599 to Ala1605, Tyr1616 to Ser1622, Tyr1623 to Ser1629, Tyr1630 to Ser1636, Tyr1637 to Ser1643, Tyr1644 to Ser1650, Tyr1651 to Ser1657, Tyr1658 to Ser1664, Tyr1665 to Ser1671, Tyr1679 to Thr1685, Tyr1686 to Thr1692, Tyr1693 to Thr1699, Tyr1700 to Thr1706, Tyr1707 to Ser1713, Tyr1717 to Lys1723, Tyr1724 to Thr1730, Tyr1731 to Ser1737, Tyr1752 to Thr1758, Tyr1759 to Thr1765, Tyr1779 to Thr1785, Tyr1786 to Ser1792, Tyr1800 to Thr1806, Tyr1821 to Thr1827, Tyr1828 to Thr1834, and Tyr1842 to Thr1848. Positions Tyr1592–Thr1848 are C-terminal domain (CTD); 26 X 7 AA approximate tandem repeats of Y-[ST]-P-[ST]-S-P-[AGKNQRST].

Belongs to the RNA polymerase beta' chain family. Component of the RNA polymerase II (Pol II) complex consisting of 12 subunits. Interacts with sig-7. In terms of processing, the tandem 7 residues repeats in the C-terminal domain (CTD) can be highly phosphorylated. The phosphorylation activates Pol II. Phosphorylation occurs mainly at residues 'Ser-2' and 'Ser-5' of the heptapeptide repeat and starts at the 3- to 4-cell embryonic stage. This phosphorylation also occurs in the early stages of oocyte development and is not detected in oocytes arrested at the meiotic diakinesis stage. In the somatic lineage, phosphorylation at 'Ser-2' is mediated by cdk-12 downstream of cdk-9 whereas in the germline lineage cdk-12 phosphorylates 'Ser-2' independently of cdk-9. Phosphorylation is likely mediated by cdk-7. May be dephosphorylated by fcp-1 in diakinetic oocytes and in 1-cell and 2-cell embryos. Dephosphorylated at 'Ser-5' of the heptapeptide repeat by ssup-72. The phosphorylation state is believed to result from the balanced action of site-specific CTD kinases and phosphatase, and a 'CTD code' that specifies the position of Pol II within the transcription cycle has been proposed. Following transcription stress, the elongating form of RNA polymerase II (RNA pol IIo) is polyubiquitinated via 'Lys-63'-linkages on Lys-1260 at DNA damage sites without leading to degradation: ubiquitination promotes RNA pol IIo backtracking to allow access by the transcription-coupled nucleotide excision repair (TC-NER) machinery. Subsequent DEF1-dependent polyubiquitination by the elongin complex via 'Lys-48'-linkages may lead to proteasome-mediated degradation; presumably at stalled RNA pol II where TC-NER has failed, to halt global transcription and enable 'last resort' DNA repair pathways.

The protein localises to the nucleus. The protein resides in the chromosome. The enzyme catalyses RNA(n) + a ribonucleoside 5'-triphosphate = RNA(n+1) + diphosphate. DNA-dependent RNA polymerase catalyzes the transcription of DNA into RNA using the four ribonucleoside triphosphates as substrates. Largest and catalytic component of RNA polymerase II which synthesizes mRNA precursors and many functional non-coding RNAs. Forms the polymerase active center together with the second largest subunit. Pol II is the central component of the basal RNA polymerase II transcription machinery. It is composed of mobile elements that move relative to each other. RPB1 is part of the core element with the central large cleft, the clamp element that moves to open and close the cleft and the jaws that are thought to grab the incoming DNA template. At the start of transcription, a single-stranded DNA template strand of the promoter is positioned within the central active site cleft of Pol II. A bridging helix emanates from RPB1 and crosses the cleft near the catalytic site and is thought to promote translocation of Pol II by acting as a ratchet that moves the RNA-DNA hybrid through the active site by switching from straight to bent conformations at each step of nucleotide addition. During transcription elongation, Pol II moves on the template as the transcript elongates. Elongation is influenced by the phosphorylation status of the C-terminal domain (CTD) of Pol II largest subunit (RPB1), which serves as a platform for assembly of factors that regulate transcription initiation, elongation, termination and mRNA processing. Involved in the transcription of several genes including those involved in embryogenesis. The chain is DNA-directed RNA polymerase II subunit RPB1 from Caenorhabditis briggsae.